We begin with the raw amino-acid sequence, 353 residues long: UDP-N-acetylglucosamine--N-acetylmuramyl-(pentapeptide) pyrophosphoryl-undecaprenol N-acetylglucosamine transferase (353 aa).

UDP-N-acetyl-alpha-D-glucosamine contacts are provided by residues Thr10–Gly12, Asn124, Ser183, and Gln283.

It belongs to the glycosyltransferase 28 family. MurG subfamily.

The protein resides in the cell inner membrane. It catalyses the reaction di-trans,octa-cis-undecaprenyl diphospho-N-acetyl-alpha-D-muramoyl-L-alanyl-D-glutamyl-meso-2,6-diaminopimeloyl-D-alanyl-D-alanine + UDP-N-acetyl-alpha-D-glucosamine = di-trans,octa-cis-undecaprenyl diphospho-[N-acetyl-alpha-D-glucosaminyl-(1-&gt;4)]-N-acetyl-alpha-D-muramoyl-L-alanyl-D-glutamyl-meso-2,6-diaminopimeloyl-D-alanyl-D-alanine + UDP + H(+). It functions in the pathway cell wall biogenesis; peptidoglycan biosynthesis. In terms of biological role, cell wall formation. Catalyzes the transfer of a GlcNAc subunit on undecaprenyl-pyrophosphoryl-MurNAc-pentapeptide (lipid intermediate I) to form undecaprenyl-pyrophosphoryl-MurNAc-(pentapeptide)GlcNAc (lipid intermediate II). The chain is UDP-N-acetylglucosamine--N-acetylmuramyl-(pentapeptide) pyrophosphoryl-undecaprenol N-acetylglucosamine transferase from Helicobacter pylori (strain P12).